A 519-amino-acid chain; its full sequence is Berghepain-1 (519 aa).

The Cytoplasmic segment spans residues 1–32 (MINDIRRINITTSSIESLNENSKYLKRNHKRT). A helical; Signal-anchor for type II membrane protein transmembrane segment spans residues 33-53 (IKICAYAITTFALFFIVVVYF). At 54–519 (KNQTNVNDAN…IGIDVFFPIL (466 aa)) the chain is on the lumenal side. N-linked (GlcNAc...) asparagine glycosylation is found at N55 and N143. 4 disulfide bridges follow: C298/C340, C333/C373, C358/C378, and C427/C508. C301 is a catalytic residue. The N-linked (GlcNAc...) asparagine glycan is linked to N432. Catalysis depends on residues H433 and N483.

It belongs to the peptidase C1 family.

It localises to the membrane. In terms of biological role, cysteine protease. Required for host hepatocyte-derived merozoite infectivity and to a lesser extent for host erythrocyte-derived merozoite infectivity. This chain is Berghepain-1, found in Plasmodium berghei (strain Anka).